The primary structure comprises 966 residues: Collagen alpha-1(I) chain (966 aa).

Residues 1 to 966 form a disordered region; it reads SYGYDEKSAG…PGPPGPPGPP (966 aa). Lys7 bears the Allysine mark. A Phosphoserine modification is found at Ser8. Residues Pro27, Pro30, Pro32, Pro41, Pro44, Pro47, Pro61, Pro76, Pro82, Pro91, and Pro97 each carry the 4-hydroxyproline modification. Over residues 64 to 78 the composition is skewed to basic and acidic residues; sequence NGDDGEAGKPGRPGE. Lys100 is modified (5-hydroxylysine; alternate). An O-linked (Gal...) hydroxylysine; alternate glycan is attached at Lys100. Ser106 carries the post-translational modification Phosphoserine. The span at 114–130 shows a compositional bias: low complexity; sequence DAGPAGPKGEPGSPGEN. Pro124, Pro127, Pro133, Pro142, Pro148, Pro169, Pro178, Pro181, Pro208, Pro211, Pro223, Pro229, Pro238, Pro244, Pro247, and Pro262 each carry 4-hydroxyproline. Low complexity predominate over residues 148-166; it reads PGASGPAGARGNDGATGAA. Pro residues predominate over residues 168–180; that stretch reads PPGPTGPAGPPGF. Low complexity predominate over residues 214-253; that stretch reads AGAAGPAGNPGADGQPGAKGANGAPGIAGAPGFPGARGPS. The residue at position 265 (Lys265) is a 5-hydroxylysine. A 4-hydroxyproline mark is found at Pro271, Pro274, Pro286, Pro295, Pro310, Pro316, Pro325, and Pro331. A compositionally biased stretch (gly residues) spans 320–329; the sequence is GERGGPGSRG. The residue at position 340 (Lys340) is a 5-hydroxylysine. Residues Pro349, Pro358, Pro364, Pro370, Pro379, Pro382, Pro391, Pro400, Pro406, Pro418, Pro427, Pro436, Pro439, Pro457, Pro475, Pro481, Pro487, Pro493, Pro499, Pro505, Pro517, Pro526, Pro538, Pro542, Pro548, Pro554, and Pro563 each carry the 4-hydroxyproline modification. Residues 373 to 399 show a composition bias toward low complexity; that stretch reads KGLTGSPGSPGPDGKTGPPGPAGQDGR. The segment covering 408 to 427 has biased composition (low complexity); sequence ARGQAGVMGFPGPKGAAGEP. Low complexity predominate over residues 469–496; that stretch reads QGPAGSPGFQGLPGPAGPPGEAGKPGEQ. 5-hydroxylysine is present on Lys575. Residues Pro581, Pro596, and Pro602 each carry the 4-hydroxyproline modification. The segment covering 608–622 has biased composition (low complexity); the sequence is SGPSGPAGPTGARGA. At Ser611 the chain carries Phosphoserine. 4-hydroxyproline occurs at positions 623, 629, 632, 641, 647, 665, 674, and 683. A compositionally biased stretch (low complexity) spans 635–662; the sequence is AGFAGPPGADGQPGAKGEPGDAGAKGDA. Residues 664–676 are compositionally biased toward pro residues; sequence PPGPAGPTGPPGP. Lys686 carries the post-translational modification 5-hydroxylysine. Residues 691–707 show a composition bias toward low complexity; that stretch reads SAGPPGATGFPGAAGRV. 2 positions are modified to 4-hydroxyproline: Pro695 and Pro701. Pro709 carries the 3-hydroxyproline modification. Residues Pro710, Pro719, Pro722, Pro746, Pro755, Pro773, Pro782, Pro785, Pro791, Pro806, Pro812, Pro818, Pro826, and Pro832 each carry the 4-hydroxyproline modification. Residues 736–755 are compositionally biased toward low complexity; sequence ETGPAGEKGSPGADGPAGAP. The segment covering 805–815 has biased composition (pro residues); sequence PPGPVGPPGLA. Residues 824–835 show a composition bias toward gly residues; sequence EGPGAEGSPGRG. The span at 852–866 shows a compositional bias: low complexity; that stretch reads AGPAGARGPAGPQGP. Residues 867–881 are compositionally biased toward basic and acidic residues; the sequence is RGDKGETGEQGDRGI. A 5-hydroxylysine modification is found at Lys870. The residue at position 882 (Lys882) is a 5-hydroxylysine; alternate. Lys882 carries an O-linked (Gal...) hydroxylysine; alternate glycan. Residues Pro897, Pro900, Pro918, and Pro933 each carry the 4-hydroxyproline modification. The segment covering 900–933 has biased composition (low complexity); it reads PGEQGPSGASGPAGPRGPPGSAGSPGKDGLNGLP. Pro938 bears the 3-hydroxyproline mark. Residue Pro939 is modified to 4-hydroxyproline. Pro residues predominate over residues 951–966; it reads VGPPGPPGPPGPPGPP. Position 953 is a 3-hydroxyproline (Pro953). Pro954 is modified (4-hydroxyproline). Pro956 is modified (3-hydroxyproline). Pro957 is modified (4-hydroxyproline). 3-hydroxyproline is present on Pro959. 4-hydroxyproline is present on residues Pro960, Pro963, and Pro966.

Belongs to the fibrillar collagen family. Trimers of one alpha 2(I) and two alpha 1(I) chains. Contains mostly 4-hydroxyproline. Proline residues at the third position of the tripeptide repeating unit (G-X-Y) are hydroxylated in some or all of the chains. In terms of processing, contains 3-hydroxyproline at a few sites. This modification occurs on the first proline residue in the sequence motif Gly-Pro-Hyp, where Hyp is 4-hydroxyproline. Post-translationally, lysine residues at the third position of the tripeptide repeating unit (G-X-Y) are 5-hydroxylated in some or all of the chains. O-glycosylated on hydroxylated lysine residues. The O-linked glycan consists of a Glc-Gal disaccharide. As to expression, expressed in bones.

The protein localises to the secreted. It localises to the extracellular space. The protein resides in the extracellular matrix. Type I collagen is a member of group I collagen (fibrillar forming collagen). This chain is Collagen alpha-1(I) chain, found in Bradypus variegatus (Brown-throated three-fingered sloth).